The following is a 173-amino-acid chain: NADH-quinone oxidoreductase subunit I 2 (173 aa).

4Fe-4S ferredoxin-type domains follow at residues 41-73 and 83-112; these read IVLTRDPDGQERCVACNLCATVCPVGCIDLAKA and EYFRVNFARCIFCGFCEDACPTAAIQLTPD. [4Fe-4S] cluster is bound by residues Cys-53, Cys-56, Cys-59, Cys-63, Cys-92, Cys-95, Cys-98, and Cys-102. Residues 153–163 are compositionally biased toward basic and acidic residues; it reads GKDKGEAEHEA. The disordered stretch occupies residues 153–173; the sequence is GKDKGEAEHEAPPVNLKGLLP.

This sequence belongs to the complex I 23 kDa subunit family. NDH-1 is composed of 14 different subunits. Subunits NuoA, H, J, K, L, M, N constitute the membrane sector of the complex. It depends on [4Fe-4S] cluster as a cofactor.

The protein resides in the cell inner membrane. The catalysed reaction is a quinone + NADH + 5 H(+)(in) = a quinol + NAD(+) + 4 H(+)(out). NDH-1 shuttles electrons from NADH, via FMN and iron-sulfur (Fe-S) centers, to quinones in the respiratory chain. The immediate electron acceptor for the enzyme in this species is believed to be ubiquinone. Couples the redox reaction to proton translocation (for every two electrons transferred, four hydrogen ions are translocated across the cytoplasmic membrane), and thus conserves the redox energy in a proton gradient. This is NADH-quinone oxidoreductase subunit I 2 from Rhodopseudomonas palustris (strain ATCC BAA-98 / CGA009).